The chain runs to 80 residues: Large ribosomal subunit protein uL24 (80 aa).

A disordered region spans residues 53–80 (HMRPTQSNPQGSIIEREFPIHASNVKKS).

This sequence belongs to the universal ribosomal protein uL24 family. In terms of assembly, part of the 50S ribosomal subunit.

In terms of biological role, one of two assembly initiator proteins, it binds directly to the 5'-end of the 23S rRNA, where it nucleates assembly of the 50S subunit. Its function is as follows. One of the proteins that surrounds the polypeptide exit tunnel on the outside of the subunit. This chain is Large ribosomal subunit protein uL24, found in Chlorobium luteolum (strain DSM 273 / BCRC 81028 / 2530) (Pelodictyon luteolum).